A 100-amino-acid polypeptide reads, in one-letter code: Small ribosomal subunit protein uS14 (100 aa).

Belongs to the universal ribosomal protein uS14 family. Part of the 30S ribosomal subunit. Contacts proteins S3 and S10.

In terms of biological role, binds 16S rRNA, required for the assembly of 30S particles and may also be responsible for determining the conformation of the 16S rRNA at the A site. The polypeptide is Small ribosomal subunit protein uS14 (Prochlorococcus marinus (strain NATL2A)).